Here is a 125-residue protein sequence, read N- to C-terminus: Fluoride-specific ion channel FluC (125 aa).

The next 4 helical transmembrane spans lie at 4–24 (VIYVALGGAVGSVLRYWVGIV), 32–52 (FLPWGTFSVNLIGSFCIGLFA), 68–88 (LLITGLLGGFTTFSAFMLDTV), and 100–120 (AFYVAASIGFGVGAVFAGLAV). 2 residues coordinate Na(+): Gly-75 and Thr-78.

It belongs to the fluoride channel Fluc/FEX (TC 1.A.43) family.

It localises to the cell inner membrane. It catalyses the reaction fluoride(in) = fluoride(out). Its activity is regulated as follows. Na(+) is not transported, but it plays an essential structural role and its presence is essential for fluoride channel function. Fluoride-specific ion channel. Important for reducing fluoride concentration in the cell, thus reducing its toxicity. This Allorhizobium ampelinum (strain ATCC BAA-846 / DSM 112012 / S4) (Agrobacterium vitis (strain S4)) protein is Fluoride-specific ion channel FluC.